The sequence spans 477 residues: 3-isopropylmalate dehydratase large subunit (477 aa).

Residues cysteine 351, cysteine 411, and cysteine 414 each contribute to the [4Fe-4S] cluster site.

Belongs to the aconitase/IPM isomerase family. LeuC type 1 subfamily. Heterodimer of LeuC and LeuD. The cofactor is [4Fe-4S] cluster.

It carries out the reaction (2R,3S)-3-isopropylmalate = (2S)-2-isopropylmalate. Its pathway is amino-acid biosynthesis; L-leucine biosynthesis; L-leucine from 3-methyl-2-oxobutanoate: step 2/4. Its function is as follows. Catalyzes the isomerization between 2-isopropylmalate and 3-isopropylmalate, via the formation of 2-isopropylmaleate. The chain is 3-isopropylmalate dehydratase large subunit from Kineococcus radiotolerans (strain ATCC BAA-149 / DSM 14245 / SRS30216).